A 312-amino-acid chain; its full sequence is Heterotepalin-4 (312 aa).

A signal peptide spans 1–22; that stretch reads MKSMLVVTISVWLILAPTSTWA. Disulfide bonds link Cys-56–Cys-280 and Cys-107–Cys-128. The active site involves Glu-197. Positions 284 to 312 are excised as a propeptide; the sequence is YNQNAMFPQLIMSTYYNYMANLGDLFEEF.

It carries out the reaction Endohydrolysis of the N-glycosidic bond at one specific adenosine on the 28S rRNA.. Inhibits protein synthesis in vitro. The polypeptide is Heterotepalin-4 (Phytolacca heterotepala (Mexican pokeweed)).